A 299-amino-acid polypeptide reads, in one-letter code: Diaminopimelate epimerase (299 aa).

Asn13, Gln46, and Asn66 together coordinate substrate. Cys75 (proton donor) is an active-site residue. Substrate is bound by residues 76–77, Asn166, Asn199, and 217–218; these read GN and ER. The active-site Proton acceptor is the Cys226. Residue 227 to 228 participates in substrate binding; that stretch reads GT.

This sequence belongs to the diaminopimelate epimerase family. Homodimer.

The protein resides in the cytoplasm. The catalysed reaction is (2S,6S)-2,6-diaminopimelate = meso-2,6-diaminopimelate. It functions in the pathway amino-acid biosynthesis; L-lysine biosynthesis via DAP pathway; DL-2,6-diaminopimelate from LL-2,6-diaminopimelate: step 1/1. Its function is as follows. Catalyzes the stereoinversion of LL-2,6-diaminopimelate (L,L-DAP) to meso-diaminopimelate (meso-DAP), a precursor of L-lysine and an essential component of the bacterial peptidoglycan. The polypeptide is Diaminopimelate epimerase (Paraburkholderia phytofirmans (strain DSM 17436 / LMG 22146 / PsJN) (Burkholderia phytofirmans)).